The chain runs to 344 residues: Heat-inducible transcription repressor HrcA (344 aa).

It belongs to the HrcA family.

Functionally, negative regulator of class I heat shock genes (grpE-dnaK-dnaJ and groELS operons). Prevents heat-shock induction of these operons. This Streptococcus mutans serotype c (strain ATCC 700610 / UA159) protein is Heat-inducible transcription repressor HrcA.